The chain runs to 47 residues: uncharacterized protein (47 aa).

This is an uncharacterized protein from Saccharomyces cerevisiae (strain ATCC 204508 / S288c) (Baker's yeast).